Consider the following 302-residue polypeptide: HTH-type transcriptional regulator AbgR (302 aa).

An HTH lysR-type domain is found at 5-62 (VKIHQIRAFVEVARQGSIRGASRMLNMSQPALSKSIQELEEGLAAQLFFRRSKGVTLT). The segment at residues 22 to 41 (IRGASRMLNMSQPALSKSIQ) is a DNA-binding region (H-T-H motif).

It belongs to the LysR transcriptional regulatory family.

Functionally, could be the regulator of the abg operon. The sequence is that of HTH-type transcriptional regulator AbgR (abgR) from Escherichia coli (strain K12).